A 202-amino-acid chain; its full sequence is MSDLRISEAFLYMDYLCFRALCCKGPPPARPEYDLVCIGLTGSGKTSLLSKLCSESPDSVVSTTGFSIKAVPFQNAILNVKELGGADNIRKYWSRYYQGSQGVIFVLDSASSEDDLETARNELHSALQHPQLCTLPFLILANHQDKPAARSVQEVKKYFELEPLARGKRWILQPCSLDDMEALKDSFSQLINLLEDHEAVRM.

Residues 39 to 46 (GLTGSGKT), 82 to 86 (ELGGA), and 142 to 145 (NHQD) contribute to the GTP site.

This sequence belongs to the small GTPase superfamily. Arf family.

In Bos taurus (Bovine), this protein is ADP-ribosylation factor-like protein 15 (ARL15).